The sequence spans 479 residues: MSGKTLYDKIWDAHVVSEAGGEAILYIDLHLIHEVTTPQAFAGLRAAGRKVRRPDRTLAVADHNIPTEGQALGVDAVADEEARLQLKTLARNVADNGIEFFPMGDIRNGIVHVVGPEQGRTQPGMTIVCGDSHTSTHGAFGALAHGIGTSEVEHVLATQTLRQKKAKNMLVRVDGQLPPGVTGKDVALAVIGEIGTAGGTGYVIEFAGEAIAGLSMEGRMTLCNLTIEGGAKAGLVAPDDKTFAYIQGKPAAPKGAAWDMALSHWKTFFTDEDAVFDRTVVIDGSALVPMVTWGTSPEDVIPVTGNVPDPESFATPDKRAAAHRALDYMGLKAGQPISEARIDRVFIGSCTNSRIEDMRAAAAVVQEAFLHGRLVAPHVKAMVVPGSGLVKEQAEEEGLDAIFKAAGFDWREPGCSMCLAMNPDKLAPQERCASTSNRNFEGRQGRAGRTHLVSPAMAAAAAIAGHLVDVRTLFSETAQ.

[4Fe-4S] cluster contacts are provided by Cys-350, Cys-415, and Cys-418.

This sequence belongs to the aconitase/IPM isomerase family. LeuC type 1 subfamily. In terms of assembly, heterodimer of LeuC and LeuD. It depends on [4Fe-4S] cluster as a cofactor.

The enzyme catalyses (2R,3S)-3-isopropylmalate = (2S)-2-isopropylmalate. It functions in the pathway amino-acid biosynthesis; L-leucine biosynthesis; L-leucine from 3-methyl-2-oxobutanoate: step 2/4. Its function is as follows. Catalyzes the isomerization between 2-isopropylmalate and 3-isopropylmalate, via the formation of 2-isopropylmaleate. This Caulobacter vibrioides (strain ATCC 19089 / CIP 103742 / CB 15) (Caulobacter crescentus) protein is 3-isopropylmalate dehydratase large subunit.